The chain runs to 386 residues: MGKLEKNVFVIWITTFTTMLGVGFIAPIMAIYAQTLGATNLEIGLIFGSFALARTVAQIPVGVLSDIYGKKFFIVCGTFFYGVSTLMYNFVSTVLGFLIVRIFTGIFSAFVTPVAGSYIAAIAPKTRLGEYMGIFNSAITLGFGIGPFIGGILADMYGIKMPFYFCGFLGILAAIISYMKLEDIVFNKNKEKIDVKKISTLFSFEFLKNRNFSSSFIINVSNVMINAGIYAYLALYAINYNITISQVGFMIALTNILMALLQRSFGKLYDKLGNIMIIIGIFIISFGMYLLSTSTTFLTILASLTIIAVGSSISSTATTSLAVKDIPTHRKGEAMGLFTTSINIGMFIGAVSFGFLADILGIANMYKFSAIFSIVVGIISYLRIER.

A run of 12 helical transmembrane segments spans residues 8-28 (VFVI…IAPI), 43-63 (IGLI…PVGV), 79-99 (FFYG…GFLI), 102-122 (IFTG…IAAI), 134-154 (IFNS…GILA), 156-176 (MYGI…AAII), 216-236 (FIIN…LALY), 241-261 (NITI…MALL), 272-292 (LGNI…YLLS), 297-317 (FLTI…SSTA), 342-362 (INIG…ILGI), and 365-385 (MYKF…LRIE).

Belongs to the major facilitator superfamily.

The protein localises to the cell membrane. This is an uncharacterized protein from Methanocaldococcus jannaschii (strain ATCC 43067 / DSM 2661 / JAL-1 / JCM 10045 / NBRC 100440) (Methanococcus jannaschii).